Consider the following 416-residue polypeptide: Basic salivary proline-rich protein 2 (416 aa).

A signal peptide spans 1–16; it reads MLLILLSVALLALSSA. The residue at position 17 (Gln17) is a Pyrrolidone carboxylic acid. Over residues 19–28 the composition is skewed to polar residues; it reads LNEDVSQEES. The segment at 19 to 416 is disordered; it reads LNEDVSQEES…QGGRPSRPPQ (398 aa). Ser24 bears the Phosphoserine mark. The span at 34–47 shows a compositional bias: low complexity; sequence GNPQGAPPQGGNKP. Pro residues-rich tracts occupy residues 48 to 104 and 112 to 165; these read QGPP…PPPQ and RSPP…PPPQ. At Ser52 the chain carries Phosphoserine. 15 tandem repeats follow at residues 53–72, 74–93, 94–113, 114–133, 135–154, 155–174, 176–195, 197–216, 217–236, 238–257, 259–278, 279–298, 300–319, 321–340, and 341–360. The segment at 53–360 is 15 X 20 AA approximate tandem repeats of P-P-G-K-P-Q-G-P-P-P-Q-G-[GD]-[NKS]-[KSQ]-[PRS]-[QRS] [GPS]-[PSAR]-[PSR]; that stretch reads PPGKPQGPPP…QGGSKSRSAR (308 aa). Asn168 carries an N-linked (GlcNAc...) asparagine glycan. The span at 177–227 shows a compositional bias: pro residues; sequence PGKPQGPPPQGGNQPQGPPPPPGKPQGPPPQGGNKPQGPPPPGKPQGPPPQ. Residue Asn230 is glycosylated (N-linked (GlcNAc...) asparagine). Ser232 carries an O-linked (Hex) serine glycan. The span at 239-289 shows a compositional bias: pro residues; the sequence is PGKPQGPPPQGGNQPQGPPPPPGKPQGPPPQGGNKPQGPPPPGKPQGPPPQ. An N-linked (GlcNAc...) asparagine glycan is attached at Asn272. Positions 290–300 are enriched in low complexity; sequence GGSKSRSSRSP. Pro residues-rich tracts occupy residues 301–351 and 378–416; these read PGKP…PPPQ and QGPP…RPPQ.

Post-translationally, N- and O-glycosylated. In head and neck cancer patients, O-glycosylated with glucosylgalactosyl carbohydrate moiety. This modification would require prior hydroxylation on the lysine residue. In terms of processing, proteolytically cleaved at the tripeptide Xaa-Pro-Gln, where Xaa in the P(3) position is mostly lysine. The endoprotease may be of microbial origin. Pyroglutamate formation occurs on terminal Gln residues of cleaved peptides. Pyroglutamate formation found on at least Gln-398 and Gln-400.

It is found in the secreted. The polypeptide is Basic salivary proline-rich protein 2 (PRB2) (Homo sapiens (Human)).